The sequence spans 703 residues: Protein FAR1-RELATED SEQUENCE 6 (703 aa).

Residues methionine 1–methionine 29 are disordered. One can recognise an FAR1 domain in the interval asparagine 99–cysteine 184. An MULE domain is found at valine 297–proline 392. The segment at phenylalanine 584–glycine 620 adopts an SWIM-type zinc-finger fold.

It belongs to the FHY3/FAR1 family. As to expression, expressed in hypocotyls, rosette and cauline leaves, inflorescences stems, flowers and siliques.

Its subcellular location is the nucleus. In terms of biological role, putative transcription activator involved in regulating light control of development. May have a role in controlling flowering time. The chain is Protein FAR1-RELATED SEQUENCE 6 (FRS6) from Arabidopsis thaliana (Mouse-ear cress).